The sequence spans 473 residues: Ribulose bisphosphate carboxylase large chain (473 aa).

Residues asparagine 116 and threonine 166 each coordinate substrate. The active-site Proton acceptor is the lysine 168. Lysine 170 serves as a coordination point for substrate. Mg(2+) is bound by residues lysine 194, aspartate 196, and glutamate 197. Position 194 is an N6-carboxylysine (lysine 194). Histidine 287 acts as the Proton acceptor in catalysis. Residues arginine 288, histidine 320, and serine 372 each coordinate substrate.

It belongs to the RuBisCO large chain family. Type I subfamily. In terms of assembly, heterohexadecamer of 8 large chains and 8 small chains. It depends on Mg(2+) as a cofactor.

The catalysed reaction is 2 (2R)-3-phosphoglycerate + 2 H(+) = D-ribulose 1,5-bisphosphate + CO2 + H2O. It catalyses the reaction D-ribulose 1,5-bisphosphate + O2 = 2-phosphoglycolate + (2R)-3-phosphoglycerate + 2 H(+). In terms of biological role, ruBisCO catalyzes two reactions: the carboxylation of D-ribulose 1,5-bisphosphate, the primary event in carbon dioxide fixation, as well as the oxidative fragmentation of the pentose substrate. Both reactions occur simultaneously and in competition at the same active site. The polypeptide is Ribulose bisphosphate carboxylase large chain (Thiomonas intermedia (strain K12) (Thiobacillus intermedius)).